The following is a 154-amino-acid chain: Myoglobin (154 aa).

The region spanning 2-148 is the Globin domain; it reads GLSDGEWQLV…FRNDIAAKYK (147 aa). Residue Ser4 is modified to Phosphoserine. Residue His65 participates in nitrite binding. His65 contributes to the O2 binding site. Position 68 is a phosphothreonine (Thr68). His94 is a heme b binding site.

Monomer.

Its subcellular location is the cytoplasm. It localises to the sarcoplasm. It carries out the reaction Fe(III)-heme b-[protein] + nitric oxide + H2O = Fe(II)-heme b-[protein] + nitrite + 2 H(+). The enzyme catalyses H2O2 + AH2 = A + 2 H2O. Its function is as follows. Monomeric heme protein which primary function is to store oxygen and facilitate its diffusion within muscle tissues. Reversibly binds oxygen through a pentacoordinated heme iron and enables its timely and efficient release as needed during periods of heightened demand. Depending on the oxidative conditions of tissues and cells, and in addition to its ability to bind oxygen, it also has a nitrite reductase activity whereby it regulates the production of bioactive nitric oxide. Under stress conditions, like hypoxia and anoxia, it also protects cells against reactive oxygen species thanks to its pseudoperoxidase activity. The sequence is that of Myoglobin from Hystrix cristata (North African crested porcupine).